Here is a 554-residue protein sequence, read N- to C-terminus: 3-(3-hydroxy-phenyl)propionate/3-hydroxycinnamic acid hydroxylase (554 aa).

FAD is bound by residues 17 to 46 and 285 to 295; these read QVAI…VVEK and FRIDRVLLAGD.

The protein belongs to the PheA/TfdB FAD monooxygenase family. The cofactor is FAD.

It catalyses the reaction 3-(3-hydroxyphenyl)propanoate + NADH + O2 + H(+) = 3-(2,3-dihydroxyphenyl)propanoate + NAD(+) + H2O. The catalysed reaction is (2E)-3-(3-hydroxyphenyl)prop-2-enoate + NADH + O2 + H(+) = (2E)-3-(2,3-dihydroxyphenyl)prop-2-enoate + NAD(+) + H2O. It functions in the pathway aromatic compound metabolism; 3-phenylpropanoate degradation. Its function is as follows. Catalyzes the insertion of one atom of molecular oxygen into position 2 of the phenyl ring of 3-(3-hydroxyphenyl)propionate (3-HPP) and hydroxycinnamic acid (3HCI). The protein is 3-(3-hydroxy-phenyl)propionate/3-hydroxycinnamic acid hydroxylase of Escherichia coli O17:K52:H18 (strain UMN026 / ExPEC).